The chain runs to 391 residues: Processive diacylglycerol beta-glucosyltransferase (391 aa).

It belongs to the glycosyltransferase 28 family. UgtP subfamily.

Its subcellular location is the cell membrane. The enzyme catalyses a 1,2-diacyl-3-O-(beta-D-glucopyranosyl)-sn-glycerol + UDP-alpha-D-glucose = a 1,2-diacyl-3-O-(beta-D-Glc-(1-&gt;6)-beta-D-Glc)-sn-glycerol + UDP + H(+). The catalysed reaction is a 1,2-diacyl-sn-glycerol + UDP-alpha-D-glucose = a 1,2-diacyl-3-O-(beta-D-glucopyranosyl)-sn-glycerol + UDP + H(+). It participates in glycolipid metabolism; diglucosyl-diacylglycerol biosynthesis. Processive glucosyltransferase involved in the biosynthesis of both the bilayer- and non-bilayer-forming membrane glucolipids. Is able to successively transfer two glucosyl residues to diacylglycerol (DAG), thereby catalyzing the formation of beta-monoglucosyl-DAG (3-O-(beta-D-glucopyranosyl)-1,2-diacyl-sn-glycerol) and beta-diglucosyl-DAG (3-O-(beta-D-glucopyranosyl-beta-(1-&gt;6)-D-glucopyranosyl)-1,2-diacyl-sn-glycerol). Beta-diglucosyl-DAG is the predominant glycolipid found in Bacillales and is also used as a membrane anchor for lipoteichoic acid (LTA). This is Processive diacylglycerol beta-glucosyltransferase from Staphylococcus saprophyticus subsp. saprophyticus (strain ATCC 15305 / DSM 20229 / NCIMB 8711 / NCTC 7292 / S-41).